Reading from the N-terminus, the 199-residue chain is NAD(P)H dehydrogenase (quinone) (199 aa).

The Flavodoxin-like domain maps to Val4–Val190. FMN is bound by residues Ser10–Ile15 and Thr79–Phe81. Position 12 (Tyr12) interacts with NAD(+). Trp99 serves as a coordination point for substrate. Position 134 (His134) interacts with FMN.

The protein belongs to the WrbA family. Requires FMN as cofactor.

It catalyses the reaction a quinone + NADH + H(+) = a quinol + NAD(+). The catalysed reaction is a quinone + NADPH + H(+) = a quinol + NADP(+). The chain is NAD(P)H dehydrogenase (quinone) from Tolumonas auensis (strain DSM 9187 / NBRC 110442 / TA 4).